The sequence spans 243 residues: Sugar fermentation stimulation protein homolog (243 aa).

This sequence belongs to the SfsA family.

The protein is Sugar fermentation stimulation protein homolog of Acaryochloris marina (strain MBIC 11017).